The following is a 303-amino-acid chain: Recombination-associated protein RdgC (303 aa).

The protein belongs to the RdgC family.

It localises to the cytoplasm. The protein localises to the nucleoid. Functionally, may be involved in recombination. The sequence is that of Recombination-associated protein RdgC from Pseudoalteromonas translucida (strain TAC 125).